We begin with the raw amino-acid sequence, 91 residues long: UPF0213 protein NMC1807 (91 aa).

Positions 4-83 constitute a GIY-YIG domain; sequence SNWSVYLILC…AAQKRQLWEQ (80 aa).

Belongs to the UPF0213 family.

The protein is UPF0213 protein NMC1807 of Neisseria meningitidis serogroup C / serotype 2a (strain ATCC 700532 / DSM 15464 / FAM18).